A 543-amino-acid polypeptide reads, in one-letter code: Chaperonin GroEL 1 (543 aa).

ATP-binding positions include 29–32, 86–90, Gly-413, 479–481, and Asp-495; these read TLGP, DGTTT, and NAA. The segment at 524-543 is disordered; the sequence is PEPKDAAPAGVGGGGGDFDY. Gly residues predominate over residues 533–543; that stretch reads GVGGGGGDFDY.

It belongs to the chaperonin (HSP60) family. As to quaternary structure, forms a cylinder of 14 subunits composed of two heptameric rings stacked back-to-back. Interacts with the co-chaperonin GroES.

It is found in the cytoplasm. The enzyme catalyses ATP + H2O + a folded polypeptide = ADP + phosphate + an unfolded polypeptide.. Together with its co-chaperonin GroES, plays an essential role in assisting protein folding. The GroEL-GroES system forms a nano-cage that allows encapsulation of the non-native substrate proteins and provides a physical environment optimized to promote and accelerate protein folding. In Anabaena sp. (strain L31), this protein is Chaperonin GroEL 1.